The sequence spans 256 residues: Protein FixA (256 aa).

Belongs to the ETF beta-subunit/FixA family. In terms of assembly, heterodimer of FixA and FixB.

Its pathway is amine and polyamine metabolism; carnitine metabolism. Its function is as follows. Required for anaerobic carnitine reduction. May bring reductant to CaiA. The polypeptide is Protein FixA (Escherichia coli O7:K1 (strain IAI39 / ExPEC)).